The following is a 506-amino-acid chain: Anaerobic nitric oxide reductase transcription regulator NorR (506 aa).

Residue Asp-57 is modified to 4-aspartylphosphate. The 230-residue stretch at 187–416 (MIGLSPAMTQ…LEHAIHRAVV (230 aa)) folds into the Sigma-54 factor interaction domain. ATP-binding positions include 215–222 (GETGTGKE) and 278–287 (ADNGTLFLDE). Residues 481–500 (WAASARALETDVANLHRLAK) constitute a DNA-binding region (H-T-H motif).

It participates in nitrogen metabolism; nitric oxide reduction. Functionally, required for the expression of anaerobic nitric oxide (NO) reductase, acts as a transcriptional activator for at least the norVW operon. Activation also requires sigma-54. This is Anaerobic nitric oxide reductase transcription regulator NorR from Salmonella heidelberg (strain SL476).